A 369-amino-acid chain; its full sequence is Pyruvate dehydrogenase E1 component subunit alpha (369 aa).

Heterodimer of an alpha and a beta chain. Thiamine diphosphate serves as cofactor.

The enzyme catalyses N(6)-[(R)-lipoyl]-L-lysyl-[protein] + pyruvate + H(+) = N(6)-[(R)-S(8)-acetyldihydrolipoyl]-L-lysyl-[protein] + CO2. Its function is as follows. The pyruvate dehydrogenase complex catalyzes the overall conversion of pyruvate to acetyl-CoA and CO(2). It contains multiple copies of three enzymatic components: pyruvate dehydrogenase (E1), dihydrolipoamide acetyltransferase (E2) and lipoamide dehydrogenase (E3). The sequence is that of Pyruvate dehydrogenase E1 component subunit alpha (pdhA) from Geobacillus stearothermophilus (Bacillus stearothermophilus).